Here is a 1343-residue protein sequence, read N- to C-terminus: uncharacterized protein (1343 aa).

Residues 432 to 449 (LYVYFVTTKTGVVAFSLL) traverse the membrane as a helical segment.

The protein belongs to the IIV-6 295L family.

Its subcellular location is the membrane. This is an uncharacterized protein from Acheta domesticus (House cricket).